A 393-amino-acid chain; its full sequence is tRNA(Met) cytidine acetate ligase (393 aa).

Glycine 81, asparagine 142, and arginine 167 together coordinate ATP.

It belongs to the TmcAL family.

It is found in the cytoplasm. It carries out the reaction cytidine(34) in elongator tRNA(Met) + acetate + ATP = N(4)-acetylcytidine(34) in elongator tRNA(Met) + AMP + diphosphate. In terms of biological role, catalyzes the formation of N(4)-acetylcytidine (ac(4)C) at the wobble position of elongator tRNA(Met), using acetate and ATP as substrates. First activates an acetate ion to form acetyladenylate (Ac-AMP) and then transfers the acetyl group to tRNA to form ac(4)C34. The sequence is that of tRNA(Met) cytidine acetate ligase from Bacillus cereus (strain AH820).